Consider the following 426-residue polypeptide: UPF0164 protein TP_0548 (426 aa).

The first 37 residues, M1–A37, serve as a signal peptide directing secretion.

The protein belongs to the UPF0164 family.

In Treponema pallidum (strain Nichols), this protein is UPF0164 protein TP_0548.